The primary structure comprises 303 residues: UDP-N-acetylenolpyruvoylglucosamine reductase (303 aa).

The FAD-binding PCMH-type domain maps to 28 to 195 (KTGGPAQYLA…ISATFGLEPG (168 aa)). The active site involves R174. S224 serves as the catalytic Proton donor. The active site involves E294.

Belongs to the MurB family. It depends on FAD as a cofactor.

Its subcellular location is the cytoplasm. It catalyses the reaction UDP-N-acetyl-alpha-D-muramate + NADP(+) = UDP-N-acetyl-3-O-(1-carboxyvinyl)-alpha-D-glucosamine + NADPH + H(+). The protein operates within cell wall biogenesis; peptidoglycan biosynthesis. Functionally, cell wall formation. The chain is UDP-N-acetylenolpyruvoylglucosamine reductase from Lactobacillus gasseri (strain ATCC 33323 / DSM 20243 / BCRC 14619 / CIP 102991 / JCM 1131 / KCTC 3163 / NCIMB 11718 / NCTC 13722 / AM63).